Here is a 183-residue protein sequence, read N- to C-terminus: Ribosome-recycling factor (183 aa).

The protein belongs to the RRF family.

Its subcellular location is the cytoplasm. Functionally, responsible for the release of ribosomes from messenger RNA at the termination of protein biosynthesis. May increase the efficiency of translation by recycling ribosomes from one round of translation to another. The protein is Ribosome-recycling factor of Buchnera aphidicola subsp. Baizongia pistaciae (strain Bp).